We begin with the raw amino-acid sequence, 86 residues long: Muscarinic toxin MTX6 (86 aa).

A signal peptide spans 1-21 (MKTLLLTLVVVTILCLDLGYT). Intrachain disulfides connect Cys24-Cys45, Cys38-Cys63, Cys67-Cys78, and Cys79-Cys84.

Belongs to the three-finger toxin family. Short-chain subfamily. Aminergic toxin sub-subfamily. Monomer. As to expression, expressed by the venom gland.

Its subcellular location is the secreted. Its function is as follows. Binds to the muscarinic acetylcholine receptor (CHRM). In Ophiophagus hannah (King cobra), this protein is Muscarinic toxin MTX6.